We begin with the raw amino-acid sequence, 292 residues long: Cyclin-dependent kinase 5 homolog (292 aa).

The 283-residue stretch at 4 to 286 (YEKLEKIGEG…AEQAMQHPYF (283 aa)) folds into the Protein kinase domain. ATP-binding positions include 10 to 18 (IGEGTYGTV) and K33. A Phosphothreonine modification is found at T14. Y15 is subject to Phosphotyrosine. D126 acts as the Proton acceptor in catalysis. A Phosphoserine modification is found at S159.

Belongs to the protein kinase superfamily. CMGC Ser/Thr protein kinase family. CDC2/CDKX subfamily.

It carries out the reaction L-seryl-[protein] + ATP = O-phospho-L-seryl-[protein] + ADP + H(+). The catalysed reaction is L-threonyl-[protein] + ATP = O-phospho-L-threonyl-[protein] + ADP + H(+). Functionally, probably involved in the control of the cell cycle. Interacts with D1 and D3-type G1 cyclins. Possible regulator of neuronal differentiation and/or development. The protein is Cyclin-dependent kinase 5 homolog (Cdk5) of Glossina morsitans morsitans (Savannah tsetse fly).